Reading from the N-terminus, the 208-residue chain is Large ribosomal subunit protein uL3 (208 aa).

Residues S134–F153 form a disordered region.

Belongs to the universal ribosomal protein uL3 family. In terms of assembly, part of the 50S ribosomal subunit. Forms a cluster with proteins L14 and L19.

Functionally, one of the primary rRNA binding proteins, it binds directly near the 3'-end of the 23S rRNA, where it nucleates assembly of the 50S subunit. This chain is Large ribosomal subunit protein uL3, found in Treponema pallidum (strain Nichols).